The chain runs to 132 residues: MWNEFKKFAFKGNVIDLAVGVVIGAAFGKIVSSLVKDIITPLLGMVLGGVDFTDLKITFGKSSIMYGNFIQTIFDFLIIAAAIFMFVKVFNKLTSKREEEKEEEIPEPTKEEELLGEIRDLLKQQNSSKDRA.

A run of 2 helical transmembrane segments spans residues Val14 to Leu34 and Gly67 to Val87.

The protein belongs to the MscL family. In terms of assembly, homopentamer.

Its subcellular location is the cell membrane. In terms of biological role, channel that opens in response to stretch forces in the membrane lipid bilayer. May participate in the regulation of osmotic pressure changes within the cell. This chain is Large-conductance mechanosensitive channel, found in Bacillus anthracis (strain A0248).